The sequence spans 1896 residues: Plexin-A1 (1896 aa).

Positions methionine 1–alanine 26 are cleaved as a signal peptide. The 486-residue stretch at glutamate 27 to valine 512 folds into the Sema domain. Topologically, residues glutamate 27–proline 1244 are extracellular. N-linked (GlcNAc...) asparagine glycosylation occurs at asparagine 77. Intrachain disulfides connect cysteine 95/cysteine 104, cysteine 130/cysteine 138, cysteine 286/cysteine 407, cysteine 302/cysteine 358, cysteine 376/cysteine 395, cysteine 515/cysteine 532, cysteine 521/cysteine 563, cysteine 524/cysteine 541, cysteine 535/cysteine 547, and cysteine 598/cysteine 617. 3 N-linked (GlcNAc...) asparagine glycosylation sites follow: asparagine 660, asparagine 672, and asparagine 701. IPT/TIG domains are found at residues proline 864 to valine 959, proline 961 to threonine 1045, proline 1048 to tyrosine 1147, and proline 1150 to tyrosine 1236. N-linked (GlcNAc...) asparagine glycosylation occurs at asparagine 1043. N-linked (GlcNAc...) asparagine glycosylation is found at asparagine 1187 and asparagine 1212. The helical transmembrane segment at alanine 1245–isoleucine 1265 threads the bilayer. A coiled-coil region spans residues leucine 1264 to alanine 1317. Over alanine 1266–serine 1896 the chain is Cytoplasmic.

The protein belongs to the plexin family. In terms of assembly, interacts directly with NRP1 and NRP2. Interacts with PLXN1B. Interacts with FARP2, RND1 and KDR/VEGFR2. Binding of SEMA3A leads to dissociation of FARP2. Interacts with CRMP1, DPYSL2/CRMP2, DPYSL3/CRMP3 and DPYSL4/CRMP4. Interacts (via TIG domains) with TREM2; the interaction mediates SEMA6D binding and signaling through TYROBP. As to expression, detected in fetal brain, lung, liver and kidney.

It localises to the cell membrane. In terms of biological role, coreceptor for SEMA3A, SEMA3C, SEMA3F and SEMA6D. Necessary for signaling by class 3 semaphorins and subsequent remodeling of the cytoskeleton. Plays a role in axon guidance, invasive growth and cell migration. Class 3 semaphorins bind to a complex composed of a neuropilin and a plexin. The plexin modulates the affinity of the complex for specific semaphorins, and its cytoplasmic domain is required for the activation of down-stream signaling events in the cytoplasm. Acts as coreceptor of TREM2 for SEMA6D in dendritic cells and is involved in the generation of immune responses and skeletal homeostasis. The protein is Plexin-A1 of Homo sapiens (Human).